Here is a 196-residue protein sequence, read N- to C-terminus: ATP-dependent Clp protease proteolytic subunit (196 aa).

Residue Ser96 is the Nucleophile of the active site. His121 is a catalytic residue.

Belongs to the peptidase S14 family. Fourteen ClpP subunits assemble into 2 heptameric rings which stack back to back to give a disk-like structure with a central cavity, resembling the structure of eukaryotic proteasomes.

Its subcellular location is the cytoplasm. The enzyme catalyses Hydrolysis of proteins to small peptides in the presence of ATP and magnesium. alpha-casein is the usual test substrate. In the absence of ATP, only oligopeptides shorter than five residues are hydrolyzed (such as succinyl-Leu-Tyr-|-NHMec, and Leu-Tyr-Leu-|-Tyr-Trp, in which cleavage of the -Tyr-|-Leu- and -Tyr-|-Trp bonds also occurs).. Functionally, cleaves peptides in various proteins in a process that requires ATP hydrolysis. Has a chymotrypsin-like activity. Plays a major role in the degradation of misfolded proteins. The polypeptide is ATP-dependent Clp protease proteolytic subunit (Streptococcus uberis (strain ATCC BAA-854 / 0140J)).